The primary structure comprises 147 residues: Ribosome maturation factor RimP (147 aa).

It belongs to the RimP family.

The protein resides in the cytoplasm. Its function is as follows. Required for maturation of 30S ribosomal subunits. In Sulfurihydrogenibium azorense (strain DSM 15241 / OCM 825 / Az-Fu1), this protein is Ribosome maturation factor RimP.